The following is a 346-amino-acid chain: [LysW]-lysine/[LysW]-ornithine hydrolase (346 aa).

His68 contributes to the Zn(2+) binding site. Asp70 is an active-site residue. Residue Asp92 participates in Zn(2+) binding. The active-site Proton acceptor is the Glu122. 3 residues coordinate Zn(2+): Glu123, Glu146, and His317.

It belongs to the peptidase M20A family. LysK subfamily. Zn(2+) serves as cofactor. Requires Co(2+) as cofactor.

Its subcellular location is the cytoplasm. It carries out the reaction [amino-group carrier protein]-C-terminal-gamma-(L-lysyl)-L-glutamate + H2O = [amino-group carrier protein]-C-terminal-L-glutamate + L-lysine. The enzyme catalyses [amino-group carrier protein]-C-terminal-gamma-(L-ornithyl)-L-glutamate + H2O = [amino-group carrier protein]-C-terminal-L-glutamate + L-ornithine. It participates in amino-acid biosynthesis; L-lysine biosynthesis via AAA pathway; L-lysine from L-alpha-aminoadipate (Thermus route): step 5/5. Its pathway is amino-acid biosynthesis; L-arginine biosynthesis. In terms of biological role, catalyzes the release of L-lysine from [LysW]-gamma-L-lysine and the release of L-ornithine from [LysW]-L-ornithine. In Saccharolobus islandicus (strain M.16.4 / Kamchatka #3) (Sulfolobus islandicus), this protein is [LysW]-lysine/[LysW]-ornithine hydrolase.